Reading from the N-terminus, the 168-residue chain is MERFIENLMYTSRWLLAPVYLGLSLGLLALAIKFFQEVFHVLPNIFDIAEADLVLVLLSLIDMTLVGGLLVMVMLSGYENFVSALDITDGREKLNWLGKMDSGSLKNKVAASIVAISSIHLLRVFMDARNIPDNKLMWYVIIHLTFVLSALVMGYLDRMSRYEKSKAA.

Transmembrane regions (helical) follow at residues 15 to 35, 53 to 73, and 136 to 156; these read LLAP…IKFF, LVLV…LVMV, and LMWY…MGYL.

The protein belongs to the UPF0114 family.

Its subcellular location is the cell membrane. The chain is UPF0114 protein PC1_0431 from Pectobacterium carotovorum subsp. carotovorum (strain PC1).